The following is a 98-amino-acid chain: Aspartyl/glutamyl-tRNA(Asn/Gln) amidotransferase subunit C (98 aa).

This sequence belongs to the GatC family. As to quaternary structure, heterotrimer of A, B and C subunits.

The catalysed reaction is L-glutamyl-tRNA(Gln) + L-glutamine + ATP + H2O = L-glutaminyl-tRNA(Gln) + L-glutamate + ADP + phosphate + H(+). It carries out the reaction L-aspartyl-tRNA(Asn) + L-glutamine + ATP + H2O = L-asparaginyl-tRNA(Asn) + L-glutamate + ADP + phosphate + 2 H(+). In terms of biological role, allows the formation of correctly charged Asn-tRNA(Asn) or Gln-tRNA(Gln) through the transamidation of misacylated Asp-tRNA(Asn) or Glu-tRNA(Gln) in organisms which lack either or both of asparaginyl-tRNA or glutaminyl-tRNA synthetases. The reaction takes place in the presence of glutamine and ATP through an activated phospho-Asp-tRNA(Asn) or phospho-Glu-tRNA(Gln). This chain is Aspartyl/glutamyl-tRNA(Asn/Gln) amidotransferase subunit C, found in Micrococcus luteus (strain ATCC 4698 / DSM 20030 / JCM 1464 / CCM 169 / CCUG 5858 / IAM 1056 / NBRC 3333 / NCIMB 9278 / NCTC 2665 / VKM Ac-2230) (Micrococcus lysodeikticus).